The following is a 431-amino-acid chain: Glutamate-1-semialdehyde 2,1-aminomutase (431 aa).

Lys270 bears the N6-(pyridoxal phosphate)lysine mark.

The protein belongs to the class-III pyridoxal-phosphate-dependent aminotransferase family. HemL subfamily. In terms of assembly, homodimer. It depends on pyridoxal 5'-phosphate as a cofactor.

The protein resides in the cytoplasm. It carries out the reaction (S)-4-amino-5-oxopentanoate = 5-aminolevulinate. Its pathway is porphyrin-containing compound metabolism; protoporphyrin-IX biosynthesis; 5-aminolevulinate from L-glutamyl-tRNA(Glu): step 2/2. This Limosilactobacillus reuteri subsp. reuteri (strain JCM 1112) (Lactobacillus reuteri) protein is Glutamate-1-semialdehyde 2,1-aminomutase.